Consider the following 120-residue polypeptide: MAASIPSDLRNLRACLLCSLIKSVDAFQTDGCENCDEVLHLKGDEEKVYDCTSANYDGMIAAMSNDDSWVCKWQKMQRRVKGIYAISVSGSLPSNVVSDLKSMGVRYKANQRDYSIQAKK.

The tract at residues 1-39 is interaction with spt-5; that stretch reads MAASIPSDLRNLRACLLCSLIKSVDAFQTDGCENCDEVL. The C4-type zinc-finger motif lies at 15 to 35; sequence CLLCSLIKSVDAFQTDGCENC.

The protein belongs to the SPT4 family. Interacts with spt-5 to form DSIF. DSIF interacts with RNA polymerase II and with the positive transcription elongation factor b complex (P-TEFb complex), which is composed of cdk-9 and cyclin-T.

Its subcellular location is the nucleus. In terms of biological role, may function as a component of the DRB sensitivity-inducing factor complex (DSIF complex), which regulates transcription elongation by RNA polymerase II. DSIF may enhance transcriptional pausing at sites proximal to the promoter, which may in turn facilitate the assembly of an elongation competent RNA polymerase II complex. This chain is Transcription elongation factor SPT4 (spt-4), found in Caenorhabditis briggsae.